Reading from the N-terminus, the 169-residue chain is Translationally-controlled tumor protein homolog (169 aa).

The TCTP domain occupies Met1–Phe169.

Belongs to the TCTP family.

The protein localises to the cytoplasm. Functionally, involved in calcium binding and microtubule stabilization. In Branchiostoma belcheri (Amphioxus), this protein is Translationally-controlled tumor protein homolog.